The following is a 304-amino-acid chain: ATP synthase gamma chain (304 aa).

This sequence belongs to the ATPase gamma chain family. As to quaternary structure, F-type ATPases have 2 components, CF(1) - the catalytic core - and CF(0) - the membrane proton channel. CF(1) has five subunits: alpha(3), beta(3), gamma(1), delta(1), epsilon(1). CF(0) has three main subunits: a, b and c.

The protein resides in the cell membrane. In terms of biological role, produces ATP from ADP in the presence of a proton gradient across the membrane. The gamma chain is believed to be important in regulating ATPase activity and the flow of protons through the CF(0) complex. The sequence is that of ATP synthase gamma chain from Mycobacterium ulcerans (strain Agy99).